The chain runs to 333 residues: Adenosine deaminase (333 aa).

The Zn(2+) site is built by H12 and H14. Residues H14, D16, and G170 each coordinate substrate. H197 is a binding site for Zn(2+). E200 serves as the catalytic Proton donor. Residue D278 coordinates Zn(2+). Position 279 (D279) interacts with substrate.

This sequence belongs to the metallo-dependent hydrolases superfamily. Adenosine and AMP deaminases family. Adenosine deaminase subfamily. It depends on Zn(2+) as a cofactor.

It catalyses the reaction adenosine + H2O + H(+) = inosine + NH4(+). It carries out the reaction 2'-deoxyadenosine + H2O + H(+) = 2'-deoxyinosine + NH4(+). In terms of biological role, catalyzes the hydrolytic deamination of adenosine and 2-deoxyadenosine. This chain is Adenosine deaminase, found in Escherichia coli O139:H28 (strain E24377A / ETEC).